Here is a 496-residue protein sequence, read N- to C-terminus: Angiopoietin-2 (496 aa).

Positions 1 to 18 (MWQIIFLTFGWDLVLASA) are cleaved as a signal peptide. N-linked (GlcNAc...) asparagine glycans are attached at residues Asn-89, Asn-119, Asn-133, Asn-151, Asn-240, and Asn-304. Residues 159-256 (QLLQHSISTN…QQHDLMETVN (98 aa)) are a coiled coil. Residues 275 to 495 (KEEQTTFRDC…ATTMMIRPAD (221 aa)) enclose the Fibrinogen C-terminal domain. A disulfide bridge connects residues Cys-284 and Cys-313. Positions 429, 431, 433, and 435 each coordinate Ca(2+). 2 disulfides stabilise this stretch: Cys-433–Cys-435 and Cys-437–Cys-450.

In terms of assembly, interacts with TEK/TIE2, competing for the same binding site as ANGPT1. Interacts with ITGA5. Interacts with SVEP1/polydom. Interacts with THBD; this interaction significantly inhibits the generation of activated PC and TAFIa/CPB2 by the thrombin/thrombomodulin complex. As to expression, expressed in the ovary, uterus and placenta.

The protein resides in the secreted. Functionally, binds to TEK/TIE2, competing for the ANGPT1 binding site, and modulating ANGPT1 signaling. Can induce tyrosine phosphorylation of TEK/TIE2 in the absence of ANGPT1. In the absence of angiogenic inducers, such as VEGF, ANGPT2-mediated loosening of cell-matrix contacts may induce endothelial cell apoptosis with consequent vascular regression. In concert with VEGF, it may facilitate endothelial cell migration and proliferation, thus serving as a permissive angiogenic signal. Involved in the regulation of lymphangiogenesis. The sequence is that of Angiopoietin-2 (Angpt2) from Mus musculus (Mouse).